Reading from the N-terminus, the 303-residue chain is GPN-loop GTPase 2 (303 aa).

Residue 29 to 34 (GSGKST) coordinates GTP. The Gly-Pro-Asn (GPN)-loop; involved in dimer interface motif lies at 85-87 (GPN). 187–190 (SKMD) lines the GTP pocket.

This sequence belongs to the GPN-loop GTPase family. Heterodimers with gpn1 or gpn3. Binds to RNA polymerase II (RNAPII).

Small GTPase required for proper localization of RNA polymerase II and III (RNAPII and RNAPIII). May act at an RNAP assembly step prior to nuclear import. The sequence is that of GPN-loop GTPase 2 from Xenopus tropicalis (Western clawed frog).